The following is a 172-amino-acid chain: Keratin, high-sulfur matrix protein, B2A (172 aa).

Ala-2 bears the N-acetylalanine mark. 5 consecutive repeats follow at residues Pro-27–Gln-36, Pro-37–Gln-46, Pro-47–Gln-56, Pro-57–Gln-66, and Pro-67–Glu-76.

Functionally, the keratin products of mammalian epidermal derivatives such as wool and hair consist of microfibrils embedded in a rigid matrix of other proteins. The matrix proteins include the high-sulfur and high-tyrosine keratins, having molecular weights of 6-20 kDa, whereas the microfibrils contain the larger, low-sulfur keratins (40-56 kDa). This chain is Keratin, high-sulfur matrix protein, B2A, found in Ovis aries (Sheep).